We begin with the raw amino-acid sequence, 493 residues long: Protein nucleotidyltransferase YdiU (493 aa).

ATP contacts are provided by Gly-81, Gly-83, Arg-84, Lys-103, Asp-115, Gly-116, Arg-166, and Arg-173. The active-site Proton acceptor is the Asp-244. 2 residues coordinate Mg(2+): Asn-245 and Asp-254. Asp-254 is an ATP binding site.

Belongs to the SELO family. Requires Mg(2+) as cofactor. Mn(2+) serves as cofactor.

The catalysed reaction is L-seryl-[protein] + ATP = 3-O-(5'-adenylyl)-L-seryl-[protein] + diphosphate. The enzyme catalyses L-threonyl-[protein] + ATP = 3-O-(5'-adenylyl)-L-threonyl-[protein] + diphosphate. It catalyses the reaction L-tyrosyl-[protein] + ATP = O-(5'-adenylyl)-L-tyrosyl-[protein] + diphosphate. It carries out the reaction L-histidyl-[protein] + UTP = N(tele)-(5'-uridylyl)-L-histidyl-[protein] + diphosphate. The catalysed reaction is L-seryl-[protein] + UTP = O-(5'-uridylyl)-L-seryl-[protein] + diphosphate. The enzyme catalyses L-tyrosyl-[protein] + UTP = O-(5'-uridylyl)-L-tyrosyl-[protein] + diphosphate. In terms of biological role, nucleotidyltransferase involved in the post-translational modification of proteins. It can catalyze the addition of adenosine monophosphate (AMP) or uridine monophosphate (UMP) to a protein, resulting in modifications known as AMPylation and UMPylation. This is Protein nucleotidyltransferase YdiU from Shewanella frigidimarina (strain NCIMB 400).